Here is a 514-residue protein sequence, read N- to C-terminus: Voltage-gated potassium channel regulatory subunit KCNG1 (514 aa).

Residues 1-224 (MTLLPGDNSD…DMVEKPHSGL (224 aa)) are Cytoplasmic-facing. Residues 181–196 (EREDEEEALDSEDQES) are compositionally biased toward acidic residues. The tract at residues 181-205 (EREDEEEALDSEDQESEGPSTSEGR) is disordered. A helical membrane pass occupies residues 225–246 (PGKVFACLSVLFVTVTAVNLSV). Residues 247–267 (STLPSLREEEEQGQCSQMCHN) are Extracellular-facing. The chain crosses the membrane as a helical span at residues 268-289 (VFIVESVCVGWFSLEFLLRFIQ). Topologically, residues 290–300 (APSKFAFLRSP) are cytoplasmic. Residues 301-321 (LTLIDLVAILPYYVTLLVDGA) traverse the membrane as a helical segment. At 322–338 (ASSRRKPSTGNSYLDKV) the chain is on the extracellular side. Residues 339 to 359 (GLVLRVLRALRILYVMRLARH) traverse the membrane as a helical; Voltage-sensor segment. Residues 360 to 374 (SLGLQTLGLTARRCT) are Cytoplasmic-facing. Residues 375-396 (REFGLLLLFLCVAIALFAPLLY) traverse the membrane as a helical segment. Residues 397–411 (VIENEMADSPEFTSI) are Extracellular-facing. The helical intramembrane region spans 412 to 423 (PACYWWAVITMT). The short motif at 424 to 429 (TVGYGD) is the Selectivity filter element. The stretch at 424–431 (TVGYGDMV) is an intramembrane region. At 432 to 438 (PRSTPGQ) the chain is on the extracellular side. The chain crosses the membrane as a helical span at residues 439 to 467 (VVALSSILSGILLMAFPVTSIFHTFSRSY). The Cytoplasmic portion of the chain corresponds to 468–514 (LELKQEQERVLIRRAQYLIKTKSQLSGMSQDSDILFGSASSDTRDNN).

Belongs to the potassium channel family. G (TC 1.A.1.2) subfamily. Kv6.1/KCNG1 sub-subfamily. In terms of assembly, heterotetramer with KCNB1 or KCNB2.

Its subcellular location is the cell membrane. Its function is as follows. Regulatory alpha-subunit of the voltage-gated potassium (Kv) channel which, when coassembled with KCNB1 or KCNB2, can modulate their expression and their gating kinetics by acting on deactivation upon repolarization and inactivation during maintained depolarization. Potassium channel subunit that does not form functional channels by itself. This chain is Voltage-gated potassium channel regulatory subunit KCNG1, found in Rattus norvegicus (Rat).